A 280-amino-acid polypeptide reads, in one-letter code: ITEIKADKTTAVANGKDAVTYTVKVMKDGKPLSGEEVTFTTTLGTLSKSTEKTNTNGYRKVSLTSANQGKSLVSASVTMPQLMLKLLEVEFFTQLTIDNGNVEIVGTGAKGKLPNVWLQYGQVNLKANGGNGKYTWYSANPAIASVDPSSGQVTLKDKGETTITVVSGDKQTAIYTIAMPNSIVSVNSSGRVDYNTANNICKNIKGSLPSSIKELKDLYDDWGAANKYQHYSQESITAWTLQTSENKVQGVASTYDLVRKNPLIDKVDIAGNYAYAVCVK.

Positions 1–92 constitute a Big-1 domain; sequence ITEIKADKTT…MLKLLEVEFF (92 aa). One can recognise a BIG2 domain in the interval 127–173; sequence ANGGNGKYTWYSANPAIASVDPSSGQVTLKDKGETTITVVSGDKQTA. Residues cysteine 201 and cysteine 278 are joined by a disulfide bond.

This sequence belongs to the intimin/invasin family.

It localises to the cell outer membrane. In terms of biological role, an inverse autotransporter. The sequence is that of Intimin (eaeA) from Hafnia alvei.